Here is a 249-residue protein sequence, read N- to C-terminus: tRNA pseudouridine synthase A (249 aa).

The active-site Nucleophile is the aspartate 53. Residue tyrosine 111 participates in substrate binding.

It belongs to the tRNA pseudouridine synthase TruA family. In terms of assembly, homodimer.

The enzyme catalyses uridine(38/39/40) in tRNA = pseudouridine(38/39/40) in tRNA. Its function is as follows. Formation of pseudouridine at positions 38, 39 and 40 in the anticodon stem and loop of transfer RNAs. The sequence is that of tRNA pseudouridine synthase A from Streptococcus pyogenes serotype M3 (strain ATCC BAA-595 / MGAS315).